The primary structure comprises 352 residues: Protein CIA1 (352 aa).

7 WD repeats span residues 18–64, 72–111, 116–155, 161–200, 211–250, 265–303, and 315–352; these read GHTD…RSWT, THTR…FECI, GHEN…EYDC, GHTQ…GEYQ, GHSS…MQSG, YHDR…SVDG, and AHEN…ATKP.

The protein belongs to the WD repeat CIA1 family. In terms of assembly, part of a complex composed of AE7, CIA1, MMS19 and NAR1. Interacts with AE7 and NAR1.

Its subcellular location is the nucleus. The protein resides in the cytoplasm. Its function is as follows. Essential component of the cytosolic iron-sulfur (Fe-S) protein assembly (CIA) machinery. Required for the maturation of extramitochondrial Fe/S proteins. In Arabidopsis thaliana (Mouse-ear cress), this protein is Protein CIA1.